The sequence spans 494 residues: Alpha-amylase-related protein (494 aa).

An N-terminal signal peptide occupies residues 1–20; it reads MIKFALALTLCLAGASLSLA. Pyrrolidone carboxylic acid is present on glutamine 21. Cysteine 48 and cysteine 104 form a disulfide bridge. 3 residues coordinate Ca(2+): asparagine 118, glutamine 169, and aspartate 178. A disulfide bridge links cysteine 157 with cysteine 171. Arginine 206 lines the chloride pocket. Catalysis depends on aspartate 208, which acts as the Nucleophile. A Ca(2+)-binding site is contributed by histidine 212. The active-site Proton donor is the glutamate 245. The chloride site is built by asparagine 308 and arginine 343. 3 cysteine pairs are disulfide-bonded: cysteine 376/cysteine 382, cysteine 418/cysteine 441, and cysteine 448/cysteine 460.

Belongs to the glycosyl hydrolase 13 family. As to quaternary structure, monomer. Ca(2+) serves as cofactor. Chloride is required as a cofactor.

Its subcellular location is the secreted. It carries out the reaction Endohydrolysis of (1-&gt;4)-alpha-D-glucosidic linkages in polysaccharides containing three or more (1-&gt;4)-alpha-linked D-glucose units.. The chain is Alpha-amylase-related protein (Amyrel) from Drosophila bocqueti (Fruit fly).